Consider the following 452-residue polypeptide: tRNA modification GTPase MnmE (452 aa).

(6S)-5-formyl-5,6,7,8-tetrahydrofolate is bound by residues arginine 21, glutamate 82, and arginine 121. One can recognise a TrmE-type G domain in the interval 217-373 (GINTTIIGKP…LENKIIEMFN (157 aa)). Asparagine 227 lines the K(+) pocket. Residues 227 to 232 (NVGKSS), 246 to 252 (TDIPGTT), and 271 to 274 (DTAG) each bind GTP. Serine 231 contributes to the Mg(2+) binding site. Residues threonine 246, isoleucine 248, and threonine 251 each coordinate K(+). Threonine 252 provides a ligand contact to Mg(2+). A (6S)-5-formyl-5,6,7,8-tetrahydrofolate-binding site is contributed by lysine 452.

The protein belongs to the TRAFAC class TrmE-Era-EngA-EngB-Septin-like GTPase superfamily. TrmE GTPase family. As to quaternary structure, homodimer. Heterotetramer of two MnmE and two MnmG subunits. K(+) serves as cofactor.

It is found in the cytoplasm. Exhibits a very high intrinsic GTPase hydrolysis rate. Involved in the addition of a carboxymethylaminomethyl (cmnm) group at the wobble position (U34) of certain tRNAs, forming tRNA-cmnm(5)s(2)U34. The chain is tRNA modification GTPase MnmE from Finegoldia magna (strain ATCC 29328 / DSM 20472 / WAL 2508) (Peptostreptococcus magnus).